The following is a 259-amino-acid chain: Putative deoxyribonuclease TATDN1 homolog (259 aa).

Residues Glu-82, His-116, His-138, and Asp-186 each coordinate a divalent metal cation.

It belongs to the metallo-dependent hydrolases superfamily. TatD-type hydrolase family. It depends on a divalent metal cation as a cofactor.

It is found in the nucleus. Functionally, putative deoxyribonuclease. This chain is Putative deoxyribonuclease TATDN1 homolog, found in Vairimorpha ceranae (strain BRL01) (Microsporidian parasite).